We begin with the raw amino-acid sequence, 242 residues long: Small ribosomal subunit protein uS7m (242 aa).

Residues M1–Y37 constitute a mitochondrion transit peptide. An N6-acetyllysine modification is found at K228.

It belongs to the universal ribosomal protein uS7 family. As to quaternary structure, component of the mitochondrial ribosome small subunit (28S) which comprises a 12S rRNA and about 30 distinct proteins.

The protein resides in the mitochondrion. The chain is Small ribosomal subunit protein uS7m (Mrps7) from Mus musculus (Mouse).